A 448-amino-acid chain; its full sequence is Tubulin beta chain (448 aa).

Positions 11, 69, 138, 142, 143, 144, 204, and 226 each coordinate GTP. E69 serves as a coordination point for Mg(2+). A disordered region spans residues Y425–E448. Residues G429–E448 are compositionally biased toward acidic residues.

The protein belongs to the tubulin family. As to quaternary structure, dimer of alpha and beta chains. A typical microtubule is a hollow water-filled tube with an outer diameter of 25 nm and an inner diameter of 15 nM. Alpha-beta heterodimers associate head-to-tail to form protofilaments running lengthwise along the microtubule wall with the beta-tubulin subunit facing the microtubule plus end conferring a structural polarity. Microtubules usually have 13 protofilaments but different protofilament numbers can be found in some organisms and specialized cells. The cofactor is Mg(2+).

Its subcellular location is the cytoplasm. It localises to the cytoskeleton. Tubulin is the major constituent of microtubules, a cylinder consisting of laterally associated linear protofilaments composed of alpha- and beta-tubulin heterodimers. Microtubules grow by the addition of GTP-tubulin dimers to the microtubule end, where a stabilizing cap forms. Below the cap, tubulin dimers are in GDP-bound state, owing to GTPase activity of alpha-tubulin. The protein is Tubulin beta chain of Metarhizium anisopliae (Entomophthora anisopliae).